Reading from the N-terminus, the 428-residue chain is Enolase (428 aa).

Position 162 (Gln-162) interacts with (2R)-2-phosphoglycerate. The Proton donor role is filled by Glu-204. Mg(2+)-binding residues include Asp-241, Glu-283, and Asp-310. (2R)-2-phosphoglycerate-binding residues include Lys-335, Arg-364, Ser-365, and Lys-386. The active-site Proton acceptor is the Lys-335.

This sequence belongs to the enolase family. Mg(2+) serves as cofactor.

The protein localises to the cytoplasm. It is found in the secreted. It localises to the cell surface. It catalyses the reaction (2R)-2-phosphoglycerate = phosphoenolpyruvate + H2O. The protein operates within carbohydrate degradation; glycolysis; pyruvate from D-glyceraldehyde 3-phosphate: step 4/5. Functionally, catalyzes the reversible conversion of 2-phosphoglycerate (2-PG) into phosphoenolpyruvate (PEP). It is essential for the degradation of carbohydrates via glycolysis. This chain is Enolase, found in Nocardia farcinica (strain IFM 10152).